The sequence spans 168 residues: Protein DESIGUAL 2 (168 aa).

Positions 1 to 20 are cleaved as a signal peptide; it reads MARNVGFFICILILAMDVSA. A run of 3 helical transmembrane segments spans residues 56–76, 94–114, and 133–153; these read LAAC…GGCL, AVAS…MLIV, and VLSI…AYYI.

The protein belongs to the DESIGUAL family. As to expression, mainly expressed in roots, inflorescences and developing leaves, and, at low levels, in mature leaves.

The protein resides in the endoplasmic reticulum membrane. In terms of biological role, involved, partially redundantly with VCC/DEAL1 and DEAL3, to ensure bilateral symmetry development and early leaf margin patterning, probably via the regulation of auxin and CUC2 distribution. The chain is Protein DESIGUAL 2 from Arabidopsis thaliana (Mouse-ear cress).